The sequence spans 62 residues: Fungus-induced protein 1 (62 aa).

Positions 1 to 22 are cleaved as a signal peptide; that stretch reads MSQNLFQILLIFAILAALQVQG.

The sequence is that of Fungus-induced protein 1 from Caenorhabditis briggsae.